A 95-amino-acid polypeptide reads, in one-letter code: Co-chaperonin GroES (95 aa).

The protein belongs to the GroES chaperonin family. Heptamer of 7 subunits arranged in a ring. Interacts with the chaperonin GroEL.

Its subcellular location is the cytoplasm. In terms of biological role, together with the chaperonin GroEL, plays an essential role in assisting protein folding. The GroEL-GroES system forms a nano-cage that allows encapsulation of the non-native substrate proteins and provides a physical environment optimized to promote and accelerate protein folding. GroES binds to the apical surface of the GroEL ring, thereby capping the opening of the GroEL channel. This is Co-chaperonin GroES from Rhodobacter capsulatus (Rhodopseudomonas capsulata).